The chain runs to 311 residues: Putative UPF0607 protein ENSP00000382826 (311 aa).

Positions 48–61 (AEEPKEATEVKDQV) are enriched in basic and acidic residues. Disordered regions lie at residues 48–99 (AEEP…WYNP), 186–229 (GLLM…PLQL), and 291–311 (RKQL…GSCL). Positions 78 to 97 (EAASTSRPLETQGNLTSSWY) are enriched in polar residues. Basic residues-rich tracts occupy residues 213–222 (AGHRSRKRKL) and 291–305 (RKQL…RQGR).

It belongs to the UPF0607 family.

The polypeptide is Putative UPF0607 protein ENSP00000382826 (Homo sapiens (Human)).